The primary structure comprises 588 residues: Sentrin-specific protease 2 (588 aa).

A Nuclear localization signal motif is present at residues 28-31 (KRRR). S32 is modified (phosphoserine). Residues 47–52 (PAKRPR) carry the Nuclear localization signal motif. The disordered stretch occupies residues 157–184 (EGYNRRPSGRRHSKSNPESSLTWKPQEQ). Residues 172 to 184 (NPESSLTWKPQEQ) show a composition bias toward polar residues. The Nuclear export signal signature appears at 316 to 331 (MEPDLSEEVSARLRLG). A phosphoserine mark is found at S332 and S343. Residues 394 to 558 (LRITRGDIQT…MFTCKYADYI (165 aa)) are protease. Catalysis depends on residues H477 and D494. C547 serves as the catalytic Nucleophile.

It belongs to the peptidase C48 family. As to quaternary structure, binds to SUMO2 and SUMO3. Interacts with the C-terminal domain of NUP153 via its N-terminus. Interacts with MTA1. Polyubiquitinated; which leads to proteasomal degradation. Highly expressed in testis. Detected in brain, heart and thymus.

The protein localises to the nucleus. The protein resides in the nuclear pore complex. Its subcellular location is the nucleus membrane. It is found in the cytoplasm. It localises to the cytoplasmic vesicle. The protein localises to the PML body. In terms of biological role, protease that catalyzes two essential functions in the SUMO pathway. The first is the hydrolysis of an alpha-linked peptide bond at the C-terminal end of the small ubiquitin-like modifier (SUMO) propeptides, SUMO1, SUMO2 and SUMO3 leading to the mature form of the proteins. The second is the deconjugation of SUMO1, SUMO2 and SUMO3 from targeted proteins, by cleaving an epsilon-linked peptide bond between the C-terminal glycine of the mature SUMO and the lysine epsilon-amino group of the target protein. May down-regulate CTNNB1 levels and thereby modulate the Wnt pathway. Deconjugates SUMO2 from MTA1. Plays a dynamic role in adipogenesis by desumoylating and promoting the stabilization of CEBPB. Acts as a regulator of the cGAS-STING pathway by catalyzing desumoylation of CGAS and STING1 during the late phase of viral infection. Activates transcription. This chain is Sentrin-specific protease 2 (Senp2), found in Mus musculus (Mouse).